The following is a 416-amino-acid chain: MFSKSVTLAQYDPDLAAAIAQEDRRQQDHVELIASENYVSCAVMEAQGSQLTNKYAEGYPAKRYYGGCEYVDIVEQLAIDRVKELFGAAYANVQPHSGSQANQAVYASVLKPGDTILGMSLAHGGHLTHGASVNISGKLYNAVTYGLDENEVLDYAEVERLALEHKPKMIVAGASAYALQIDWAKFREIADKVGAYLFVDMAHYAGLVAGGEYPNPVPFCDFVTTTTHKTLRGPRGGVILCRDNTHEKALNSSIFPSLQGGPLMHVIAAKAVAFKEALQPEFKQYAKQVKINAAVMAEELVKRGLRIVSGRTESHVFLVDLQPMKITGKAAEAALGKAHITVNKNAIPNDPEKPFVTSGIRIGSAAMTTRGFNETDARVLSNLVADVLANPEDEANLAKVRGQVTALCDKYPVYGT.

Residues leucine 121 and 125-127 (GHL) contribute to the (6S)-5,6,7,8-tetrahydrofolate site. Position 229 is an N6-(pyridoxal phosphate)lysine (lysine 229).

This sequence belongs to the SHMT family. In terms of assembly, homodimer. It depends on pyridoxal 5'-phosphate as a cofactor.

The protein localises to the cytoplasm. The enzyme catalyses (6R)-5,10-methylene-5,6,7,8-tetrahydrofolate + glycine + H2O = (6S)-5,6,7,8-tetrahydrofolate + L-serine. Its pathway is one-carbon metabolism; tetrahydrofolate interconversion. It functions in the pathway amino-acid biosynthesis; glycine biosynthesis; glycine from L-serine: step 1/1. Functionally, catalyzes the reversible interconversion of serine and glycine with tetrahydrofolate (THF) serving as the one-carbon carrier. This reaction serves as the major source of one-carbon groups required for the biosynthesis of purines, thymidylate, methionine, and other important biomolecules. Also exhibits THF-independent aldolase activity toward beta-hydroxyamino acids, producing glycine and aldehydes, via a retro-aldol mechanism. In Neisseria gonorrhoeae (strain ATCC 700825 / FA 1090), this protein is Serine hydroxymethyltransferase.